The following is a 302-amino-acid chain: Sulfate adenylyltransferase subunit 2 (302 aa).

Belongs to the PAPS reductase family. CysD subfamily. Heterodimer composed of CysD, the smaller subunit, and CysN.

The enzyme catalyses sulfate + ATP + H(+) = adenosine 5'-phosphosulfate + diphosphate. It functions in the pathway sulfur metabolism; hydrogen sulfide biosynthesis; sulfite from sulfate: step 1/3. Functionally, with CysN forms the ATP sulfurylase (ATPS) that catalyzes the adenylation of sulfate producing adenosine 5'-phosphosulfate (APS) and diphosphate, the first enzymatic step in sulfur assimilation pathway. APS synthesis involves the formation of a high-energy phosphoric-sulfuric acid anhydride bond driven by GTP hydrolysis by CysN coupled to ATP hydrolysis by CysD. The chain is Sulfate adenylyltransferase subunit 2 from Shigella dysenteriae serotype 1 (strain Sd197).